The following is a 387-amino-acid chain: Formate-dependent phosphoribosylglycinamide formyltransferase (387 aa).

N(1)-(5-phospho-beta-D-ribosyl)glycinamide contacts are provided by residues 12–13 and glutamate 72; that span reads EL. ATP contacts are provided by residues arginine 104, lysine 145, 150–155, 185–188, and glutamate 193; these read SSGKGQ and EEFI. The 192-residue stretch at 109-300 folds into the ATP-grasp domain; that stretch reads DLAAKDLKLL…EFELHIRAIL (192 aa). The Mg(2+) site is built by glutamate 258 and glutamate 270. N(1)-(5-phospho-beta-D-ribosyl)glycinamide is bound by residues aspartate 277, lysine 348, and 355 to 356; that span reads RR.

It belongs to the PurK/PurT family. As to quaternary structure, homodimer.

The enzyme catalyses N(1)-(5-phospho-beta-D-ribosyl)glycinamide + formate + ATP = N(2)-formyl-N(1)-(5-phospho-beta-D-ribosyl)glycinamide + ADP + phosphate + H(+). It functions in the pathway purine metabolism; IMP biosynthesis via de novo pathway; N(2)-formyl-N(1)-(5-phospho-D-ribosyl)glycinamide from N(1)-(5-phospho-D-ribosyl)glycinamide (formate route): step 1/1. In terms of biological role, involved in the de novo purine biosynthesis. Catalyzes the transfer of formate to 5-phospho-ribosyl-glycinamide (GAR), producing 5-phospho-ribosyl-N-formylglycinamide (FGAR). Formate is provided by PurU via hydrolysis of 10-formyl-tetrahydrofolate. This is Formate-dependent phosphoribosylglycinamide formyltransferase from Leptospira borgpetersenii serovar Hardjo-bovis (strain JB197).